The following is a 257-amino-acid chain: GTP cyclohydrolase FolE2 (257 aa).

It belongs to the GTP cyclohydrolase IV family.

The enzyme catalyses GTP + H2O = 7,8-dihydroneopterin 3'-triphosphate + formate + H(+). It functions in the pathway cofactor biosynthesis; 7,8-dihydroneopterin triphosphate biosynthesis; 7,8-dihydroneopterin triphosphate from GTP: step 1/1. Its function is as follows. Converts GTP to 7,8-dihydroneopterin triphosphate. The protein is GTP cyclohydrolase FolE2 of Kosmotoga olearia (strain ATCC BAA-1733 / DSM 21960 / TBF 19.5.1).